The following is a 317-amino-acid chain: 17-beta-hydroxysteroid dehydrogenase type 6 (317 aa).

The signal sequence occupies residues 1–17 (MWLYLAVLLGLYYLLRW). Residue 33-57 (FITGCDSGFGNQLARQLDLRGLRVL) participates in NAD(+) binding. N-linked (GlcNAc...) asparagine glycans are attached at residues asparagine 71 and asparagine 161. Residue serine 164 coordinates substrate. Tyrosine 176 acts as the Proton acceptor in catalysis.

Belongs to the short-chain dehydrogenases/reductases (SDR) family.

The protein localises to the microsome membrane. It localises to the endoplasmic reticulum membrane. The enzyme catalyses all-trans-retinol--[retinol-binding protein] + NAD(+) = all-trans-retinal--[retinol-binding protein] + NADH + H(+). The catalysed reaction is all-trans-retinol + NAD(+) = all-trans-retinal + NADH + H(+). It carries out the reaction androsterone + NAD(+) = 5alpha-androstan-3,17-dione + NADH + H(+). It catalyses the reaction testosterone + NAD(+) = androst-4-ene-3,17-dione + NADH + H(+). The enzyme catalyses 5alpha-androstane-3alpha,17beta-diol + NAD(+) = 17beta-hydroxy-5alpha-androstan-3-one + NADH + H(+). The catalysed reaction is 17beta-estradiol + NAD(+) = estrone + NADH + H(+). It carries out the reaction 17beta-estradiol + NADP(+) = estrone + NADPH + H(+). It catalyses the reaction 3alpha-hydroxy-5alpha-pregnan-20-one + NAD(+) = 5alpha-pregnane-3,20-dione + NADH + H(+). The enzyme catalyses 5alpha-androstane-3beta,17beta-diol + NAD(+) = 17beta-hydroxy-5alpha-androstan-3-one + NADH + H(+). The catalysed reaction is 3beta-hydroxy-5alpha-androstan-17-one + NAD(+) = 5alpha-androstan-3,17-dione + NADH + H(+). Its function is as follows. NAD-dependent oxidoreductase with broad substrate specificity that shows both oxidative and reductive activity (in vitro). Has 17-beta-hydroxysteroid dehydrogenase activity towards various steroids (in vitro). Converts 5-alpha-androstan-3-alpha,17-beta-diol to androsterone and estradiol to estrone (in vitro). Has 3-alpha-hydroxysteroid dehydrogenase activity towards androsterone (in vitro). Has retinol dehydrogenase activity towards all-trans-retinol (in vitro). Can convert androsterone to epi-androsterone. Androsterone is first oxidized to 5-alpha-androstane-3,17-dione and then reduced to epi-andosterone. Can act on both C-19 and C-21 3-alpha-hydroxysteroids. This Bos taurus (Bovine) protein is 17-beta-hydroxysteroid dehydrogenase type 6 (HSD17B6).